The sequence spans 858 residues: Leucine--tRNA ligase (858 aa).

Positions 42 to 52 (PYPSGRLHMGH) match the 'HIGH' region motif. The 'KMSKS' region motif lies at 618–622 (KMSKS). Lys621 is an ATP binding site.

The protein belongs to the class-I aminoacyl-tRNA synthetase family.

It localises to the cytoplasm. The catalysed reaction is tRNA(Leu) + L-leucine + ATP = L-leucyl-tRNA(Leu) + AMP + diphosphate. This chain is Leucine--tRNA ligase, found in Aliivibrio fischeri (strain ATCC 700601 / ES114) (Vibrio fischeri).